Here is a 290-residue protein sequence, read N- to C-terminus: Probable transcriptional regulatory protein HAH1 (290 aa).

This sequence belongs to the TACO1 family.

The protein localises to the mitochondrion. The sequence is that of Probable transcriptional regulatory protein HAH1 from Saccharomyces cerevisiae (strain ATCC 204508 / S288c) (Baker's yeast).